The sequence spans 647 residues: Threonine--tRNA ligase (647 aa).

A TGS domain is found at 1-61 (MINITFPDGA…TEDGSIEIVT (61 aa)). Residues 242–540 (DHRKLGKELD…LIENYKGAFP (299 aa)) are catalytic. Residues cysteine 336, histidine 387, and histidine 517 each coordinate Zn(2+).

This sequence belongs to the class-II aminoacyl-tRNA synthetase family. Homodimer. Zn(2+) is required as a cofactor.

It is found in the cytoplasm. It catalyses the reaction tRNA(Thr) + L-threonine + ATP = L-threonyl-tRNA(Thr) + AMP + diphosphate + H(+). Catalyzes the attachment of threonine to tRNA(Thr) in a two-step reaction: L-threonine is first activated by ATP to form Thr-AMP and then transferred to the acceptor end of tRNA(Thr). Also edits incorrectly charged L-seryl-tRNA(Thr). This Streptococcus pneumoniae serotype 19F (strain G54) protein is Threonine--tRNA ligase.